A 410-amino-acid chain; its full sequence is 3-phosphoshikimate 1-carboxyvinyltransferase (410 aa).

Residues Lys-20, Ser-21, and Arg-25 each contribute to the 3-phosphoshikimate site. Lys-20 provides a ligand contact to phosphoenolpyruvate. Phosphoenolpyruvate-binding residues include Gly-87 and Arg-115. 6 residues coordinate 3-phosphoshikimate: Ser-157, Ser-158, Gln-159, Ser-183, Asp-293, and Lys-320. A phosphoenolpyruvate-binding site is contributed by Gln-159. Asp-293 serves as the catalytic Proton acceptor. Phosphoenolpyruvate-binding residues include Arg-324, Arg-365, and Lys-391.

It belongs to the EPSP synthase family. As to quaternary structure, monomer.

It localises to the cytoplasm. It catalyses the reaction 3-phosphoshikimate + phosphoenolpyruvate = 5-O-(1-carboxyvinyl)-3-phosphoshikimate + phosphate. The protein operates within metabolic intermediate biosynthesis; chorismate biosynthesis. Functionally, catalyzes the transfer of the enolpyruvyl moiety of phosphoenolpyruvate (PEP) to the 5-hydroxyl of shikimate-3-phosphate (S3P) to produce enolpyruvyl shikimate-3-phosphate and inorganic phosphate. The sequence is that of 3-phosphoshikimate 1-carboxyvinyltransferase from Thermoplasma volcanium (strain ATCC 51530 / DSM 4299 / JCM 9571 / NBRC 15438 / GSS1).